The sequence spans 329 residues: R-linalool synthase (329 aa).

Asp79 is a binding site for Mg(2+). The short motif at 79-83 is the DDXXD motif element; that stretch reads DDQFD. Arg172 provides a ligand contact to substrate. Asn218 and Ser222 together coordinate Mg(2+). An NXXXSXXXD motif motif is present at residues 218–226; it reads NELHSFEKD. Lys225 lines the substrate pocket. Residue Asp226 coordinates Mg(2+). 308 to 309 lines the substrate pocket; the sequence is RY.

This sequence belongs to the terpene synthase family. In terms of assembly, homodimer. Mg(2+) serves as cofactor.

It catalyses the reaction (2E)-geranyl diphosphate + H2O = (R)-linalool + diphosphate. It carries out the reaction (2E,6E)-farnesyl diphosphate + H2O = (6E)-nerolidol + diphosphate. Its function is as follows. In vitro, catalyzes the formation of R-linalool from geranyl diphosphate (GPP). Can also accept farnesyl diphosphate (FPP) as substrate to produce trans-nerolidol. The protein is R-linalool synthase of Streptomyces clavuligerus.